A 188-amino-acid polypeptide reads, in one-letter code: Protein GrpE (188 aa).

A disordered region spans residues 1-30 (MTKKTSHHKAEQKEKRAGEESGRESEVLDH). Basic and acidic residues predominate over residues 8–30 (HKAEQKEKRAGEESGRESEVLDH).

This sequence belongs to the GrpE family. In terms of assembly, homodimer.

It localises to the cytoplasm. Functionally, participates actively in the response to hyperosmotic and heat shock by preventing the aggregation of stress-denatured proteins, in association with DnaK and GrpE. It is the nucleotide exchange factor for DnaK and may function as a thermosensor. Unfolded proteins bind initially to DnaJ; upon interaction with the DnaJ-bound protein, DnaK hydrolyzes its bound ATP, resulting in the formation of a stable complex. GrpE releases ADP from DnaK; ATP binding to DnaK triggers the release of the substrate protein, thus completing the reaction cycle. Several rounds of ATP-dependent interactions between DnaJ, DnaK and GrpE are required for fully efficient folding. This Chlorobium phaeobacteroides (strain BS1) protein is Protein GrpE.